Here is a 192-residue protein sequence, read N- to C-terminus: Adenylate kinase (192 aa).

12–17 (GSGKTT) contacts ATP. Residues 34 to 63 (STGDLLRAEVASGSELGKTIDSFISKGNLV) form an NMP region. AMP-binding positions include T35, R40, 61–63 (NLV), 88–91 (GYPR), and Q95. Residues 130–136 (GRNRGTD) are LID. Position 131 (R131) interacts with ATP. AMP contacts are provided by R133 and R145. R173 contacts ATP.

Belongs to the adenylate kinase family. In terms of assembly, monomer.

The protein resides in the cytoplasm. The enzyme catalyses AMP + ATP = 2 ADP. It functions in the pathway purine metabolism; AMP biosynthesis via salvage pathway; AMP from ADP: step 1/1. Functionally, catalyzes the reversible transfer of the terminal phosphate group between ATP and AMP. Plays an important role in cellular energy homeostasis and in adenine nucleotide metabolism. This is Adenylate kinase from Campylobacter jejuni (strain RM1221).